The sequence spans 130 residues: Small ribosomal subunit protein uS11 (130 aa).

This sequence belongs to the universal ribosomal protein uS11 family. Part of the 30S ribosomal subunit.

Its function is as follows. Located on the platform of the 30S subunit. The sequence is that of Small ribosomal subunit protein uS11 from Nanoarchaeum equitans (strain Kin4-M).